Reading from the N-terminus, the 814-residue chain is MNKTIVLAGDRNYTRQLETTIKSILYHNRDVKIYILNQDIMPDWFRKPRKIARMLGSEIIDVKLPEQTVFQDWEKQDHISSITYARYFIADYIQEDKVLYLDSDLIVNTSLEKLFSICLEEKSLAAVKDTDGITFNAGVLLINNKKWRQEKLKERLIEQSIVTMKEVEEGRFEHFNGDQTIFNQVLQDDWLELGRAYNLQVGHDIVALYNNWQEHLAFNDKPVVIHFTTYRKPWTTLTANRYRDLWWEFHDLEWSQILQHHMGEFELISPLDKEFSCLTLTNSQDLEGIEELVTALPEVVFHIAAWTDMGDKLKKLAVYNNVRLHPQIVPPVLDKLKKSTNLYLDINHGSADENFLKSLQEQEKTLLAFQSTQHGELGQIVFENGKVSFMIDTIKDFKKNGHLTCFRQLPSLTCLTFTASQYIEQLDYLAGQLPNVVFQIAAWTAMGPKLYDLSNRYPNIQLYPAISRDKLDELKEKMDAYLDINLLTSTSDIVAEMAHLSKPILAFYKSQNGNNGQRLYSSEHPERMLADLQKLITKDMLEKPLDIIQVKGIDETLDYIIEHNSSLVRFGDGEINMLAGHSIPYQDYDEELVSIMRDIIGQESREDLVVCLPDAFTDRFRFTSWAIPFWKDHMDHYMDFYRELCSDSWYGSTFVSRPYIDFEDKSQAKAQFEKLKSIWENRDLLIVEGATSRSGVGNDLFDEANSIKRIICPSHSAFSRVHELEQEIEKYAGGRLILCMLGPTAKVLSYNLCQMGYQVLDVGHIDSEYEWMKMGAKTKVKFSHKHTAEHNFDQDIEFIDDETYNSQIVARILN.

Positions 1–264 are GT8 domain; sequence MNKTIVLAGD…SQILQHHMGE (264 aa). Residues 8–13 and 102–103 each bind UDP; these read AGDRNY and DS. D102, D104, and H226 together coordinate Mn(2+). A UDP-binding site is contributed by 226-232; sequence HFTTYRK. Residues 542-814 form a GT-D domain region; it reads EKPLDIIQVK…NSQIVARILN (273 aa).

The protein in the N-terminal section; belongs to the glycosyltransferase 8 family. It in the C-terminal section; belongs to the GT-D family.

It functions in the pathway protein modification; protein glycosylation. Its function is as follows. Involved in the polymorphic O-glycosylation of the serine-rich repeat protein PsrP. Catalyzes the third step in glycosylation PsrP in this bacteria. Transfers glucose from UDP-glucose to the terminal glucose moiety of already-glycosylated PsrP (using truncated substrates with PsrP SSR1-GlcNAc-Glc); the C-terminal GT-D domain is sufficient for this reaction in vitro. Also transfers galactose from UDP-galactose to the terminal glucose moiety of already-glycosylated PsrP; the C-terminal GT-D domain is also sufficient for this reaction in vitro. Activity is much higher with UDP-glucose, and the enzyme has a very marked preference for PsrP substrate that has already been modified by GlcNAc and glucose. In vitro has hydrolytic activity against UDP-galactose and to a lesser extent against UDP-glucose. In terms of biological role, also catalyzes the fourth step in glycosylation of PsrP in this bacteria. Can transfer the sugar from both UDP-glucose and UDP-galactose to the terminal sugar moiety of PsrP-GlcNAc-Glc-Glc and PsrP-GlcNAc-Glc-Gal; the C-terminal GT-D domain is also sufficient for this reaction in vitro (using truncated substrates with glycosylated PsrP SSR1). The N-terminal GT-D domain can transfer galactose from UDP-galactose to PsrP-GlcNAc-Glc-Gal or PsrP-GlcNAc-Glc-Glc in the fourth step. The polypeptide is Glycosyltransferase GlyD (Streptococcus pneumoniae serotype 4 (strain ATCC BAA-334 / TIGR4)).